The chain runs to 450 residues: Ceramide glucosyltransferase (450 aa).

Over 1 to 8 the chain is Lumenal; the sequence is MSDSGTLS. A helical transmembrane segment spans residues 9 to 29; it reads LIGGIVFLVLWVVVWSICLLG. The Cytoplasmic segment spans residues 30 to 337; sequence WRTARIRYAH…IRVRKKMTLA (308 aa). A short sequence motif (D1) is located at residue D96. Position 148 (D148) is a short sequence motif, D2. D286 is a short sequence motif (D3). D286 acts as the Proton acceptor in catalysis. The (Q/R)XXRW motif lies at 323 to 327; that stretch reads RRVRW. Residues 338–358 traverse the membrane as a helical segment; it reads ATLLEPLTESIISGLYGAWAI. At 359–361 the chain is on the lumenal side; that stretch reads SRL. Residues 362 to 382 traverse the membrane as a helical segment; the sequence is LGGNILPLFLLHMAAWISVDI. The Cytoplasmic portion of the chain corresponds to 383–401; that stretch reads STKRALETNIKGIGPPESK. A helical transmembrane segment spans residues 402 to 422; it reads VTFLMAWAARECLALPIWMLA. Topologically, residues 423 to 450 are lumenal; the sequence is MTSSEVVWRGQKYKIIASGEAIRLGDRN.

It belongs to the glycosyltransferase 2 family.

The protein localises to the golgi apparatus membrane. The catalysed reaction is an N-acylsphing-4-enine + UDP-alpha-D-glucose = a beta-D-glucosyl-(1&lt;-&gt;1')-N-acylsphing-4-enine + UDP + H(+). The protein operates within lipid metabolism; sphingolipid metabolism. Functionally, catalyzes the final step in the biosynthesis of the membrane lipid glucosylceramide (GluCer), the transfer of glucose to ceramide. Glucosylceramides play important roles in growth, differentiation and pathogenicity. Essential factor in determining the success of fungal infection by regulating survival of yeast cells during the initial colonization of the host lung. The polypeptide is Ceramide glucosyltransferase (Cryptococcus neoformans var. grubii serotype A (strain H99 / ATCC 208821 / CBS 10515 / FGSC 9487) (Filobasidiella neoformans var. grubii)).